A 697-amino-acid polypeptide reads, in one-letter code: MNKYKNKYNTDNKFNNSKYIKNNQVELSKQELEDEEILKINDDEFNEGLNKQALFQQDDYVYKFKKQQKEEKIGGDEKTQIDNEKPEDFNITLKSIDFKSINLPSFKKRFLQSSTIKDIDSFEFINSTTEFIIENKSDDDNYYDDDDDDEGDKNKEKEKEKEKEKEKEKEKEKEKEKEKEKEKEKEKNKEIENKTYPNNCKIPIANTGESECLPNTLKLFFKKTQFPTPTLFQQYAWPAILTGHDIIGTSLPGSGKTLGYLAPMIPHCLARVDRGGKNKITGEKAPKQYTGILVLVLVPTRELGLQVHSNTLIITQLFGIKTSVIYGGISKNLQIEQLEKEKPQILISTPGRLIEMIENGHVDLSSVTMLVLDEADKMLSKGLIPQLKQIRGQIRPDSQNILFSATFPDSLKEVSKDWIKDPSIRLRIGSSELPKLNHIQQDAQLIAHHKKPRALIKLLSEPQFKEKKKTIVFFNKIKELKRISIMLLKSNIKHDTIFGNIDQELREKLINKFSSSRSTLLLSTDIIGRGIHIDDIFNIINYDFPRSLEQYCHRVGRAGRSDKVVNPKAFSFLTNSDSYLVEPFVQFLKDQHQNISIPFLKLCNENFGTKFEFTLSKRKQKKLAQKDDVEKDDEAYLAKYEKLIKKDRKKDSDDECKKFKSFKRKNIDSDSDNDSDSNSDNGKETKSKDKNKKFKKY.

Residues 137–190 (SDDDNYYDDDDDDEGDKNKEKEKEKEKEKEKEKEKEKEKEKEKEKEKEKEKNKE) form a disordered region. The span at 140–151 (DNYYDDDDDDEG) shows a compositional bias: acidic residues. A compositionally biased stretch (basic and acidic residues) spans 152–190 (DKNKEKEKEKEKEKEKEKEKEKEKEKEKEKEKEKEKNKE). A Q motif motif is present at residues 189 to 234 (KEIENKTYPNNCKIPIANTGESECLPNTLKLFFKKTQFPTPTLFQQ). Residues 226-228 (FPT), Gln-233, and 250-257 (SLPGSGKT) each bind ATP. The Helicase ATP-binding domain maps to 237–425 (WPAILTGHDI…KDWIKDPSIR (189 aa)). Residues 373 to 376 (DEAD) carry the DEAD box motif. The Helicase C-terminal domain maps to 450-603 (KKPRALIKLL…NISIPFLKLC (154 aa)). A disordered region spans residues 665 to 697 (KNIDSDSDNDSDSNSDNGKETKSKDKNKKFKKY).

Belongs to the DEAD box helicase family. DDX5/DBP2 subfamily.

It localises to the cytoplasm. It is found in the nucleus. The enzyme catalyses ATP + H2O = ADP + phosphate + H(+). Its function is as follows. Probable ATP-dependent RNA helicase. The polypeptide is Probable ATP-dependent RNA helicase ddx5 (ddx5) (Dictyostelium discoideum (Social amoeba)).